The chain runs to 277 residues: Large ribosomal subunit protein uL2 (277 aa).

2 disordered regions span residues 24–55 and 221–277; these read ITTS…RHHG and RGSV…RKKK.

This sequence belongs to the universal ribosomal protein uL2 family. As to quaternary structure, part of the 50S ribosomal subunit. Forms a bridge to the 30S subunit in the 70S ribosome.

Its function is as follows. One of the primary rRNA binding proteins. Required for association of the 30S and 50S subunits to form the 70S ribosome, for tRNA binding and peptide bond formation. It has been suggested to have peptidyltransferase activity; this is somewhat controversial. Makes several contacts with the 16S rRNA in the 70S ribosome. The polypeptide is Large ribosomal subunit protein uL2 (Listeria innocua serovar 6a (strain ATCC BAA-680 / CLIP 11262)).